Here is a 366-residue protein sequence, read N- to C-terminus: Histidinol-phosphate aminotransferase (366 aa).

Position 228 is an N6-(pyridoxal phosphate)lysine (K228).

It belongs to the class-II pyridoxal-phosphate-dependent aminotransferase family. Histidinol-phosphate aminotransferase subfamily. Homodimer. Requires pyridoxal 5'-phosphate as cofactor.

It catalyses the reaction L-histidinol phosphate + 2-oxoglutarate = 3-(imidazol-4-yl)-2-oxopropyl phosphate + L-glutamate. Its pathway is amino-acid biosynthesis; L-histidine biosynthesis; L-histidine from 5-phospho-alpha-D-ribose 1-diphosphate: step 7/9. The chain is Histidinol-phosphate aminotransferase from Corynebacterium glutamicum (strain R).